We begin with the raw amino-acid sequence, 331 residues long: DNA double-strand break repair nuclease NurA (331 aa).

Mn(2+) contacts are provided by D56 and D131.

The protein belongs to the NurA family. As to quaternary structure, homodimer. Interacts with SSB. Requires Mn(2+) as cofactor.

The 5'-3' ssDNA and dsDNA exonuclease and ssDNA endonuclease activities are inhibited by SSB (single-stranded DNA-binding protein). In terms of biological role, involved in DNA double-strand break (DSB) repair. Probably acts with HerA to stimulate resection of the 5' strand and produce the long 3' single-strand that is required for RadA loading. Exhibits both single-stranded endonuclease activity and 5'-3' exonuclease activity on single-stranded and double-stranded DNA. The protein is DNA double-strand break repair nuclease NurA of Sulfurisphaera tokodaii (strain DSM 16993 / JCM 10545 / NBRC 100140 / 7) (Sulfolobus tokodaii).